The following is a 5202-amino-acid chain: Usherin (5202 aa).

Residues 1–31 (MNCPVLSLGSGFLFQVIEMLIFAYFASISLT) form the signal peptide. At 32-5042 (ESRGLFPRLE…KSTEFYSELW (5011 aa)) the chain is on the extracellular side. The Laminin N-terminal domain maps to 271 to 517 (QDFRLYQVAL…AVDEITISGR (247 aa)). N-linked (GlcNAc...) asparagine glycosylation is found at Asn-361 and Asn-451. Cystine bridges form between Cys-518–Cys-527, Cys-520–Cys-536, Cys-538–Cys-549, Cys-552–Cys-572, Cys-575–Cys-584, Cys-577–Cys-605, Cys-608–Cys-617, Cys-620–Cys-638, Cys-641–Cys-655, Cys-643–Cys-662, Cys-664–Cys-673, Cys-676–Cys-691, Cys-694–Cys-708, Cys-696–Cys-715, Cys-717–Cys-726, Cys-729–Cys-744, Cys-747–Cys-759, Cys-749–Cys-766, Cys-768–Cys-777, Cys-780–Cys-792, Cys-795–Cys-808, Cys-797–Cys-815, Cys-817–Cys-826, Cys-829–Cys-844, Cys-847–Cys-861, Cys-849–Cys-868, Cys-870–Cys-879, Cys-882–Cys-897, Cys-900–Cys-913, Cys-902–Cys-920, Cys-922–Cys-931, Cys-934–Cys-948, Cys-951–Cys-963, Cys-953–Cys-970, Cys-972–Cys-982, Cys-985–Cys-999, Cys-1002–Cys-1014, Cys-1004–Cys-1021, Cys-1023–Cys-1032, and Cys-1035–Cys-1050. Laminin EGF-like domains follow at residues 518–574 (CQCH…NCKP), 575–640 (CQCN…VCKP), 641–693 (CDCD…GCSP), 694–746 (CNCN…GCEP), 747–794 (CQCN…NCKA), 795–846 (CDCD…LCLP), 847–899 (CNCD…HCQM), 900–950 (CECD…GCLP), 951–1001 (CSCH…RCQP), and 1002–1052 (CNCH…GCSK). N-linked (GlcNAc...) asparagine glycosylation is found at Asn-587 and Asn-611. An N-linked (GlcNAc...) asparagine glycan is attached at Asn-650. Asn-697 carries an N-linked (GlcNAc...) asparagine glycan. Asn-839, Asn-856, and Asn-862 each carry an N-linked (GlcNAc...) asparagine glycan. N-linked (GlcNAc...) asparagine glycosylation is present at Asn-888. N-linked (GlcNAc...) asparagine glycosylation occurs at Asn-944. N-linked (GlcNAc...) asparagine glycosylation occurs at Asn-1011. Fibronectin type-III domains follow at residues 1058 to 1146 (PPPR…TKPG), 1148 to 1244 (PEGN…APPQ), 1245 to 1363 (RLSP…SAPV), and 1364 to 1468 (FMIP…AAPA). 3 N-linked (GlcNAc...) asparagine glycosylation sites follow: Asn-1071, Asn-1151, and Asn-1174. Asn-1379, Asn-1388, Asn-1479, and Asn-1635 each carry an N-linked (GlcNAc...) asparagine glycan. Laminin G-like domains follow at residues 1517-1709 (MKGI…WEGC) and 1714-1891 (NEGA…LDGC). Cysteines 1672 and 1709 form a disulfide. N-linked (GlcNAc...) asparagine glycosylation is present at Asn-1779. A disulfide bond links Cys-1862 and Cys-1891. Fibronectin type-III domains lie at 1869–1955 (TRGA…AAPQ), 1957–2054 (VPTP…TPQE), 2055–2144 (APQE…LPPE), 2145–2239 (HVDS…TDED), 2243–2330 (GVPA…APPE), 2331–2433 (GTVN…MPPG), 2437–2531 (GVLP…TAED), 2535–2622 (PVVP…TLPG), 2624–2722 (PEGI…TRPS), 2726–2819 (GVQP…THPT), 2820–2923 (VPQN…TLAG), 2927–3018 (RGAN…TCDG), 3022–3112 (GMLP…TPSD), and 3113–3209 (IPTP…CCEE). Asn-1903, Asn-2011, Asn-2014, Asn-2048, Asn-2130, Asn-2182, Asn-2195, Asn-2258, Asn-2285, Asn-2322, Asn-2377, Asn-2382, Asn-2407, and Asn-2413 each carry an N-linked (GlcNAc...) asparagine glycan. Residues Asn-2581, Asn-2584, Asn-2656, Asn-2710, Asn-2770, and Asn-2788 are each glycosylated (N-linked (GlcNAc...) asparagine). Asn-2930, Asn-2937, Asn-2970, Asn-3032, and Asn-3099 each carry an N-linked (GlcNAc...) asparagine glycan. Residues Asn-3217, Asn-3330, Asn-3419, and Asn-3433 are each glycosylated (N-linked (GlcNAc...) asparagine). Disulfide bonds link Cys-3371/Cys-3444 and Cys-3399/Cys-3425. Fibronectin type-III domains are found at residues 3403–3497 (CPAS…TKED), 3501–3589 (GVSP…TQGV), 3592–3682 (SILP…AAPE), 3684–3770 (VWVT…TPMS), 3774–3865 (EIYP…TPEA), 3866–3963 (APMD…TLEA), 3964–4067 (PPQD…SSPS), 4068–4153 (GLRN…TDEA), 4157–4261 (SQLA…TLQA), 4262–4357 (PPEG…AAPS), 4358–4445 (EVSP…ALPE), 4446–4530 (NMDS…TSPS), 4534–4630 (GMEP…TPEI), 4636–4733 (PPPH…TGPA), 4734–4827 (PPEG…THPA), and 4828–4927 (PPSG…SFTT). Asn-3653, Asn-3694, Asn-3733, Asn-3780, and Asn-3849 each carry an N-linked (GlcNAc...) asparagine glycan. An N-linked (GlcNAc...) asparagine glycan is attached at Asn-3984. Residues Asn-4202, Asn-4226, Asn-4317, and Asn-4418 are each glycosylated (N-linked (GlcNAc...) asparagine). The segment at 4518–4541 (ILSPLVKDRTSPSAPSGMEPPKLQ) is disordered. N-linked (GlcNAc...) asparagine glycosylation is found at Asn-4564, Asn-4583, Asn-4691, Asn-4754, and Asn-4800. N-linked (GlcNAc...) asparagine glycosylation is found at Asn-4943 and Asn-4950. The chain crosses the membrane as a helical span at residues 5043–5063 (FIVLMAMLGLILLAIFLSLIL). The Cytoplasmic portion of the chain corresponds to 5064–5202 (QRKIHKEPYI…ERTTFTDTHL (139 aa)). Residues 5200-5202 (THL) carry the PDZ-binding motif.

In terms of assembly, interacts with collagen IV and fibronectin via its laminin EGF-like domains. Interaction with collagen may be required for stable integration into the basement membrane. Interacts with NINL. Interacts with USH1C. Component of USH2 complex, composed of ADGRV1, PDZD7, USH2A and WHRN. Interacts with ADGRV1/MASS1 (via N-terminal PDZ domain). Interacts (via the cytoplasmic region) with WHRN. Interacts (via the cytoplasmic region) with PDZD7. Interacts (via the cytoplasmic region) with VEZT and MYO7A (via MyTH4-FERM domains); the interaction associates VEZT with the USH2 complex at the stereocilia base. In terms of tissue distribution, present in the basement membrane of many, but not all tissues. Expressed in retina, cochlea, small and large intestine, pancreas, bladder, prostate, esophagus, trachea, thymus, salivary glands, placenta, ovary, fallopian tube, uterus and testis. Absent in many other tissues such as heart, lung, liver, kidney and brain. In the retina, it is present in the basement membranes in the Bruch's layer choroid capillary basement membranes, where it localizes just beneath the retinal pigment epithelial cells (at protein level). Weakly expressed. Isoform 2 is expressed in fetal eye, cochlea and heart, and at very low level in brain, CNS, intestine, skeleton, tongue, kidney and lung. Isoform 2 is not expressed in stomach and liver. In adult tissues, isoform 2 is expressed in neural retina and testis, and at low level in brain, heart, kidney and liver. Isoform 1 displays a similar pattern of expression but is expressed at very low level in fetal cochlea.

The protein localises to the cell projection. It localises to the stereocilium membrane. Its subcellular location is the secreted. Its function is as follows. Involved in hearing and vision as member of the USH2 complex. In the inner ear, required for the maintenance of the hair bundle ankle formation, which connects growing stereocilia in developing cochlear hair cells. In retina photoreceptors, the USH2 complex is required for the maintenance of periciliary membrane complex that seems to play a role in regulating intracellular protein transport. This chain is Usherin (USH2A), found in Homo sapiens (Human).